A 165-amino-acid polypeptide reads, in one-letter code: 16S rRNA aminocarboxypropyltransferase (165 aa).

4 residues coordinate S-adenosyl-L-methionine: threonine 17, leucine 62, leucine 83, and threonine 102.

This sequence belongs to the TDD superfamily. TSR3 family.

The protein localises to the cytoplasm. It catalyses the reaction an N(1)-methylpseudouridine in rRNA + S-adenosyl-L-methionine = N(1)-methyl-N(3)-[(3S)-3-amino-3-carboxypropyl]pseudouridine in rRNA + S-methyl-5'-thioadenosine + H(+). Functionally, aminocarboxypropyltransferase that catalyzes the aminocarboxypropyl transfer on pseudouridine corresponding to position 914 in M.jannaschii 16S rRNA. It constitutes the last step in biosynthesis of the hypermodified N1-methyl-N3-(3-amino-3-carboxypropyl) pseudouridine (m1acp3-Psi). This Halobacterium salinarum (strain ATCC 700922 / JCM 11081 / NRC-1) (Halobacterium halobium) protein is 16S rRNA aminocarboxypropyltransferase.